The primary structure comprises 446 residues: Glutamate-1-semialdehyde 2,1-aminomutase (446 aa).

K264 carries the post-translational modification N6-(pyridoxal phosphate)lysine.

This sequence belongs to the class-III pyridoxal-phosphate-dependent aminotransferase family. HemL subfamily. Pyridoxal 5'-phosphate is required as a cofactor.

It is found in the cytoplasm. The enzyme catalyses (S)-4-amino-5-oxopentanoate = 5-aminolevulinate. It participates in porphyrin-containing compound metabolism; protoporphyrin-IX biosynthesis; 5-aminolevulinate from L-glutamyl-tRNA(Glu): step 2/2. This is Glutamate-1-semialdehyde 2,1-aminomutase from Natronomonas pharaonis (strain ATCC 35678 / DSM 2160 / CIP 103997 / JCM 8858 / NBRC 14720 / NCIMB 2260 / Gabara) (Halobacterium pharaonis).